The sequence spans 260 residues: 3'-5' ssDNA/RNA exonuclease TatD (260 aa).

Residues glutamate 92, histidine 128, and histidine 153 each contribute to the a divalent metal cation site.

This sequence belongs to the metallo-dependent hydrolases superfamily. TatD-type hydrolase family. TatD subfamily. As to quaternary structure, monomer. Mg(2+) is required as a cofactor.

It is found in the cytoplasm. Its function is as follows. 3'-5' exonuclease that prefers single-stranded DNA and RNA. May play a role in the H(2)O(2)-induced DNA damage repair. This chain is 3'-5' ssDNA/RNA exonuclease TatD, found in Pantoea sp. (strain At-9b).